We begin with the raw amino-acid sequence, 170 residues long: Large ribosomal subunit protein bL9 (170 aa).

The tract at residues 149–170 (DGDNEDLDEDNAADENEDYSEE) is disordered.

It belongs to the bacterial ribosomal protein bL9 family.

Its function is as follows. Binds to the 23S rRNA. The protein is Large ribosomal subunit protein bL9 of Psychrobacter cryohalolentis (strain ATCC BAA-1226 / DSM 17306 / VKM B-2378 / K5).